The primary structure comprises 488 residues: Cytochrome P450 monooxygenase orf2 (488 aa).

Residues 7–27 (LPGIFLPLAGCVLALSLTTIV) traverse the membrane as a helical segment. Heme is bound at residue cysteine 432.

Belongs to the cytochrome P450 family. Heme is required as a cofactor.

The protein localises to the membrane. It functions in the pathway secondary metabolite biosynthesis. Its function is as follows. Cytochrome P450 monooxygenase; part of the gene cluster that mediates the biosynthesis of nigerpyrone and its derivatives carbonarone A and pestalamide A. The biosynthesis pathway begins with the polyketide assembly by epaA to form phenylacetyl triketide precursor from successive condensation of two malonyl-CoA, presumably with one phenylacetyl-CoA starter unit produced by the phenylacetyl-CoA ligase epaB. For the nigerpyrone biosynthesis, the reactive polyketide chain is released as an aldehyde through the R-domain. A nonenzymatic cyclization and dehydration may create nigerpyrone. For the biosynthesis of carbonarone A and pestalamide A, an extra methyl group is added through the C-methyltransferase domain. Several further steps involving the dehydrogenase orf1, the cytochrome P450 monooxygenase orf2 and the FAD-dependent monooxygenase orf3 are required to form a carbonarone A precursor which is converted to carbonarone A via cyclization. The O-acetyltransferase epaC could catalyze the transfer of 2-methylsuccinyl-CoA, a common intermediate in the ethylmalonyl-CoA pathway, to generate the final product pestalamide A. This chain is Cytochrome P450 monooxygenase orf2, found in Aspergillus niger (strain ATCC MYA-4892 / CBS 513.88 / FGSC A1513).